Reading from the N-terminus, the 883-residue chain is Mitogen-activated protein kinase kinase kinase YODA (883 aa).

Disordered regions lie at residues 28 to 193 (GFAS…AEMF), 303 to 364 (CSPE…PPLL), and 376 to 396 (SAAT…TVSP). A compositionally biased stretch (low complexity) spans 57–72 (SRLPSRSPSPSTRVSR). Positions 94–105 (VTSTDSGMNGSQ) are enriched in polar residues. Residues 143–165 (SVSSGSSVGDIPSDSLLSPLASD) show a composition bias toward low complexity. Composition is skewed to polar residues over residues 167–189 (ENGN…NKNS) and 314–328 (RMTS…QSGA). Positions 400 to 656 (WKKGRLLGMG…AAQLLDHAFV (257 aa)) constitute a Protein kinase domain. Residues 406 to 414 (LGMGSFGHV) and Lys-429 contribute to the ATP site. The active-site Proton acceptor is Asp-525. Disordered regions lie at residues 712–773 (GSGF…GAIP) and 787–838 (EGIG…IQPG). Positions 733–756 (SPIFHSHSPHISGRRSPSPISSPH) are enriched in low complexity.

This sequence belongs to the protein kinase superfamily. STE Ser/Thr protein kinase family. MAP kinase kinase kinase subfamily. Interacts with ASK7. Interacts with BSK12/SSP. Binds to BASL and MPK6. In terms of tissue distribution, expressed in roots, leaves, guard cells, stems, flowers and siliques.

It is found in the cytoplasm. Its subcellular location is the cell cortex. The protein localises to the cell membrane. The catalysed reaction is L-seryl-[protein] + ATP = O-phospho-L-seryl-[protein] + ADP + H(+). It catalyses the reaction L-threonyl-[protein] + ATP = O-phospho-L-threonyl-[protein] + ADP + H(+). Contains an N-terminal autoinhibitory domain. Its function is as follows. Functions in a MAP kinase cascade that acts as a molecular switch to regulate the first cell fate decisions in the zygote and the early embryo. Promotes elongation of the zygote and development of its basal daughter cell into the extra-embryonic suspensor. In stomatal development, acts downstream of the LRR receptor TMM, but upstream of the MKK4/MKK5-MPK3/MPK6 module to regulate stomatal cell fate before the guard mother cell (GMC) is specified. Plays a central role in both guard cell identity and pattern formation. This MAPK cascade also functions downstream of the ER receptor in regulating coordinated local cell proliferation, which shapes the morphology of plant organs. Upon brassinosteroid signaling, is inhibited by phosphorylation of its auto-inhibitory N-terminal domain by the GSK3-like kinase ASK7. The sequence is that of Mitogen-activated protein kinase kinase kinase YODA from Arabidopsis thaliana (Mouse-ear cress).